A 134-amino-acid polypeptide reads, in one-letter code: Holo-[acyl-carrier-protein] synthase (134 aa).

Residues Asp-8 and Glu-56 each coordinate Mg(2+).

Belongs to the P-Pant transferase superfamily. AcpS family. The cofactor is Mg(2+).

The protein localises to the cytoplasm. It carries out the reaction apo-[ACP] + CoA = holo-[ACP] + adenosine 3',5'-bisphosphate + H(+). Functionally, transfers the 4'-phosphopantetheine moiety from coenzyme A to a Ser of acyl-carrier-protein. The protein is Holo-[acyl-carrier-protein] synthase of Clostridium kluyveri (strain ATCC 8527 / DSM 555 / NBRC 12016 / NCIMB 10680 / K1).